We begin with the raw amino-acid sequence, 476 residues long: Aspartyl/glutamyl-tRNA(Asn/Gln) amidotransferase subunit B (476 aa).

This sequence belongs to the GatB/GatE family. GatB subfamily. Heterotrimer of A, B and C subunits.

It carries out the reaction L-glutamyl-tRNA(Gln) + L-glutamine + ATP + H2O = L-glutaminyl-tRNA(Gln) + L-glutamate + ADP + phosphate + H(+). The catalysed reaction is L-aspartyl-tRNA(Asn) + L-glutamine + ATP + H2O = L-asparaginyl-tRNA(Asn) + L-glutamate + ADP + phosphate + 2 H(+). Its function is as follows. Allows the formation of correctly charged Asn-tRNA(Asn) or Gln-tRNA(Gln) through the transamidation of misacylated Asp-tRNA(Asn) or Glu-tRNA(Gln) in organisms which lack either or both of asparaginyl-tRNA or glutaminyl-tRNA synthetases. The reaction takes place in the presence of glutamine and ATP through an activated phospho-Asp-tRNA(Asn) or phospho-Glu-tRNA(Gln). This chain is Aspartyl/glutamyl-tRNA(Asn/Gln) amidotransferase subunit B, found in Nitratidesulfovibrio vulgaris (strain ATCC 29579 / DSM 644 / CCUG 34227 / NCIMB 8303 / VKM B-1760 / Hildenborough) (Desulfovibrio vulgaris).